An 872-amino-acid polypeptide reads, in one-letter code: Extended synaptotagmin-2-A (872 aa).

The interval 1–25 (MSSESSAEKGPPPSPAENVQPGVPP) is disordered. Residues 1–31 (MSSESSAEKGPPPSPAENVQPGVPPAAEEPG) are Cytoplasmic-facing. Residues 32–52 (MISVDIAGLFYQFSKTFILIF) form a helical membrane-spanning segment. The Lumenal portion of the chain corresponds to 53-55 (PVY). Residues 56–76 (VLGYFGLSFSWLLIALVLLLW) traverse the membrane as a helical segment. The Cytoplasmic portion of the chain corresponds to 77 to 872 (WRRNKGNKNS…EDGTRPAVSS (796 aa)). The region spanning 119–298 (DIERAEWLNK…LPNRITVPLV (180 aa)) is the SMP-LTD domain. C2 domains lie at 297-417 (LVSD…DEWF) and 442-588 (NLDQ…HLNN). Positions 328, 329, 341, 388, 389, 390, 392, 394, and 395 each coordinate Ca(2+). Positions 608-617 (KPVRSPDEQH) are enriched in basic and acidic residues. Residues 608-711 (KPVRSPDEQH…EPTPSIASDI (104 aa)) are disordered. The segment covering 632–652 (PPTPQMPSPSPAVAHKPPPTP) has biased composition (pro residues). A compositionally biased stretch (polar residues) spans 664–681 (NKGTPPSASPKSPTELHQ). Low complexity predominate over residues 682–696 (SSSSLSGSSFTYSPS). Residues 737 to 859 (PLGQIQLTIR…DAAKGWTQWY (123 aa)) form the C2 3 domain. The required for phosphatidylinositol 4,5-bisphosphate-dependent location at the cell membrane stretch occupies residues 784–791 (KRRSGRRK).

It belongs to the extended synaptotagmin family. As to quaternary structure, interacts with fgfr1 that has been activated by fgf1 binding. Interacts (via C2 domains) with the AP-2 complex (via an alpha subunit). Identified in a complex with the AP-2 complex and fgfr1.

The protein localises to the cell membrane. It is found in the endoplasmic reticulum membrane. Its function is as follows. Tethers the endoplasmic reticulum to the cell membrane and promotes the formation of appositions between the endoplasmic reticulum and the cell membrane. Binds glycerophospholipids in a barrel-like domain and may play a role in cellular lipid transport. Plays a role in the rapid internalization of fgfr1 that has been activated by fgf1 binding; this occurs most likely via the AP-2 complex. Required for normal fgf signaling and the activation of downstream signaling cascades via its role in the internalization of activated fgfr1. Required for normal embryonic development via its role in fgf signaling and the downstream regulation of t/xBRA expression. The polypeptide is Extended synaptotagmin-2-A (esyt2-a) (Xenopus laevis (African clawed frog)).